A 252-amino-acid chain; its full sequence is Indole-3-glycerol phosphate synthase (252 aa).

The protein belongs to the TrpC family.

The catalysed reaction is 1-(2-carboxyphenylamino)-1-deoxy-D-ribulose 5-phosphate + H(+) = (1S,2R)-1-C-(indol-3-yl)glycerol 3-phosphate + CO2 + H2O. It functions in the pathway amino-acid biosynthesis; L-tryptophan biosynthesis; L-tryptophan from chorismate: step 4/5. This Listeria monocytogenes serotype 4b (strain CLIP80459) protein is Indole-3-glycerol phosphate synthase.